We begin with the raw amino-acid sequence, 555 residues long: Formate--tetrahydrofolate ligase (555 aa).

65–72 (TPAGEGKT) is a binding site for ATP.

The protein belongs to the formate--tetrahydrofolate ligase family.

It catalyses the reaction (6S)-5,6,7,8-tetrahydrofolate + formate + ATP = (6R)-10-formyltetrahydrofolate + ADP + phosphate. Its pathway is one-carbon metabolism; tetrahydrofolate interconversion. In Caldanaerobacter subterraneus subsp. tengcongensis (strain DSM 15242 / JCM 11007 / NBRC 100824 / MB4) (Thermoanaerobacter tengcongensis), this protein is Formate--tetrahydrofolate ligase.